We begin with the raw amino-acid sequence, 454 residues long: Protein pid-2 (454 aa).

A disordered region spans residues 31 to 61 (VQNNQKEHPPVQEIKTVSSKSKEHRVSSSRK). The span at 50–61 (KSKEHRVSSSRK) shows a compositional bias: basic and acidic residues.

In terms of assembly, may interact with pid-4, pid-5, app-1 and prmt-5. In terms of tissue distribution, expressed throughout the mitotic and meiotic regions of the germline and in oocytes.

The protein localises to the cytoplasm. It is found in the perinuclear region. The protein resides in the cytoplasmic granule. Its function is as follows. Involved in gene silencing mediated by a class of 21 nucleotide PIWI-interacting RNAs (piRNAs) that possess a uracil residue at the 5'-end (also called 21U-RNAs) and that guide the Piwi protein prg-1 to its DNA targets for silencing. Not required for the biogenesis of 21U-RNAs. May also be involved in gene silencing mediated by 22G-siRNAs (a class of 22 nucleotide endogenous small interfering RNAs (siRNAs) that possess a triphosphorylated guanine residue at the 5'-end) and 26G-siRNAs (a class of 26 nucleotide siRNAs that possess a guanine residue at the 5'-end). Required for the biogenesis of secondary and tertiary 22G-siRNAs from many loci. Specifically, promotes the production of 22G-siRNAs from the 5' end of target mRNAs. May play a role in the production of 26G-siRNAs. Plays a role in small RNA-directed transgenerational epigenetic inheritance (also called RNAe) over several generations and germline immortality. Together with the argonaut protein hrde-1, promotes the silencing of the DNA transposable element Tc1. Required for the formation of liquid-like condensates in the cytoplasm called Z granules, playing a role in maintaining their assembly, viscosity and morphology in adult germ cells, and localization in early embryos. This is Protein pid-2 from Caenorhabditis elegans.